The following is a 51-amino-acid chain: Large ribosomal subunit protein eL39z/eL39x (51 aa).

Positions 1-21 (MPSHKSFMIKKKLGKKMRQNR) are disordered. Residues 7-19 (FMIKKKLGKKMRQ) are compositionally biased toward basic residues.

Belongs to the eukaryotic ribosomal protein eL39 family.

This chain is Large ribosomal subunit protein eL39z/eL39x (RPL39A), found in Arabidopsis thaliana (Mouse-ear cress).